The sequence spans 351 residues: Protein RecA (351 aa).

Residue 68–75 (GPESSGKT) participates in ATP binding.

The protein belongs to the RecA family.

Its subcellular location is the cytoplasm. Functionally, can catalyze the hydrolysis of ATP in the presence of single-stranded DNA, the ATP-dependent uptake of single-stranded DNA by duplex DNA, and the ATP-dependent hybridization of homologous single-stranded DNAs. It interacts with LexA causing its activation and leading to its autocatalytic cleavage. The protein is Protein RecA of Chloroflexus aurantiacus (strain ATCC 29364 / DSM 637 / Y-400-fl).